The chain runs to 65 residues: Hirudin-3 (65 aa).

The interaction with thrombin active site stretch occupies residues 1–3 (VVY). Cystine bridges form between Cys-6/Cys-14, Cys-16/Cys-28, and Cys-22/Cys-39. The disordered stretch occupies residues 39-65 (CVTGEGTPKPQSHNDGDFEEIPEEYLQ). Thr-45 carries O-linked (GalNAc...) threonine glycosylation. Residues 55–65 (DFEEIPEEYLQ) are interaction with fibrinogen-binding exosite of thrombin. Residues 55-65 (DFEEIPEEYLQ) show a composition bias toward acidic residues. Tyr-63 bears the Sulfotyrosine mark.

This sequence belongs to the protease inhibitor I14 (hirudin) family.

It is found in the secreted. Functionally, hirudin is a potent thrombin-specific protease inhibitor. It forms a stable non-covalent complex with alpha-thrombin, thereby abolishing its ability to cleave fibrinogen. This Hirudo medicinalis (Medicinal leech) protein is Hirudin-3.